Reading from the N-terminus, the 241-residue chain is Ribonuclease HII (241 aa).

The 201-residue stretch at 27–227 (GPVAGVDEAG…REARSLRLED (201 aa)) folds into the RNase H type-2 domain. A divalent metal cation-binding residues include aspartate 33, glutamate 34, and aspartate 128.

The protein belongs to the RNase HII family. Mn(2+) serves as cofactor. The cofactor is Mg(2+).

Its subcellular location is the cytoplasm. The enzyme catalyses Endonucleolytic cleavage to 5'-phosphomonoester.. Functionally, endonuclease that specifically degrades the RNA of RNA-DNA hybrids. This Frankia alni (strain DSM 45986 / CECT 9034 / ACN14a) protein is Ribonuclease HII.